The chain runs to 328 residues: MIKPLTNHGNKNIYPDNSTLIVILGPTAVGKTSLSLQLARDINGEIISADSMQIYKDMDIGTAKASQKERNIIPHYMIDIIKPDQEFSVAEYQAMVDNLIPGIVYRNKVPILVGGTGLYIRAVIEGFLFPEMDKNIELRQKLQKEAQQYGNKYVYNKLKKIDPELAKKLHPNDLRRVIRGIEVYHQTGKTMTYFKKEKQKKGDRYRNLKIGLYREREELYKRINKRVDIMIEQGLIDEVKYLLTKYPDLSKTARQGLGYKEIIGYLKREYDREEAIRLLKRNTRRYAKRQLTWFRRDQDINWFNLSTGDYKKIYSEIKKLSRDFLLDF.

ATP is bound at residue 25–32 (GPTAVGKT). 27-32 (TAVGKT) lines the substrate pocket. The interaction with substrate tRNA stretch occupies residues 50–53 (DSMQ).

Belongs to the IPP transferase family. In terms of assembly, monomer. Mg(2+) is required as a cofactor.

It carries out the reaction adenosine(37) in tRNA + dimethylallyl diphosphate = N(6)-dimethylallyladenosine(37) in tRNA + diphosphate. In terms of biological role, catalyzes the transfer of a dimethylallyl group onto the adenine at position 37 in tRNAs that read codons beginning with uridine, leading to the formation of N6-(dimethylallyl)adenosine (i(6)A). The protein is tRNA dimethylallyltransferase of Halothermothrix orenii (strain H 168 / OCM 544 / DSM 9562).